A 155-amino-acid chain; its full sequence is Ribosomal RNA large subunit methyltransferase H (155 aa).

S-adenosyl-L-methionine is bound by residues leucine 72, glycine 103, and 122–127 (LSPLTF).

Belongs to the RNA methyltransferase RlmH family. As to quaternary structure, homodimer.

The protein resides in the cytoplasm. The catalysed reaction is pseudouridine(1915) in 23S rRNA + S-adenosyl-L-methionine = N(3)-methylpseudouridine(1915) in 23S rRNA + S-adenosyl-L-homocysteine + H(+). In terms of biological role, specifically methylates the pseudouridine at position 1915 (m3Psi1915) in 23S rRNA. The protein is Ribosomal RNA large subunit methyltransferase H of Alkalilimnicola ehrlichii (strain ATCC BAA-1101 / DSM 17681 / MLHE-1).